A 467-amino-acid polypeptide reads, in one-letter code: MAATPVRTRFAPSPTGYLHIGGARTALFSWAYARRHGGRFILRIEDTDVARSTPEAVQAILDGMKWLGLEHDEGPFYQMQRMDRYKEVIQQMLAAGTAYYCYTSKEELDALRAEQEAKKEKPRYDGRWRPAPGKTLPTPPAGVQPVVRFCNPTTGVVAWDDLVKGRIEISNTELDDFIIARADGTPTYNFCVVVDDWDMGITQVIRGDDHVNNTPRQINVLQALGASVPQYAHLSMILGDDGTKLSKRHGAVSVMQYDDEGYLPEAVINYLARLGWSHGDDEIFSREQFVEWFDLDHITPSAAQFNTEKLNWLNAHYIKQADNAYLAAEVANRLARRGVDPEAGPALEQVVALYKDRSANLNELADAAELFCVDVHAAPEVIAQHLTDTARAALASLRARFEAVAWDKAALNQAIKDTMAEHGLKMPQVAIPLRVALLGVPQTPSIDAVVEVLGRERVLARLARHLG.

The 'HIGH' region signature appears at 12–22 (PSPTGYLHIGG). Residues 114-128 (EQEAKKEKPRYDGRW) are compositionally biased toward basic and acidic residues. The segment at 114-140 (EQEAKKEKPRYDGRWRPAPGKTLPTPP) is disordered. The 'KMSKS' region motif lies at 244–248 (KLSKR). Lys247 serves as a coordination point for ATP.

It belongs to the class-I aminoacyl-tRNA synthetase family. Glutamate--tRNA ligase type 1 subfamily. In terms of assembly, monomer.

The protein resides in the cytoplasm. The catalysed reaction is tRNA(Glu) + L-glutamate + ATP = L-glutamyl-tRNA(Glu) + AMP + diphosphate. Its function is as follows. Catalyzes the attachment of glutamate to tRNA(Glu) in a two-step reaction: glutamate is first activated by ATP to form Glu-AMP and then transferred to the acceptor end of tRNA(Glu). The sequence is that of Glutamate--tRNA ligase from Azoarcus sp. (strain BH72).